Here is a 90-residue protein sequence, read N- to C-terminus: UPF0335 protein RPD_1405 (90 aa).

The protein belongs to the UPF0335 family.

The chain is UPF0335 protein RPD_1405 from Rhodopseudomonas palustris (strain BisB5).